A 980-amino-acid polypeptide reads, in one-letter code: Serine/threonine-protein phosphatase 4 regulatory subunit 3 (980 aa).

The region spanning 1-105 (MTTDTRRRVK…EKICQVQGKD (105 aa)) is the WH1 domain. Disordered stretches follow at residues 640-668 (RDKMENRTDGGLPIIRSGGRFRRDQRQME), 695-861 (VSEK…SLCD), and 885-980 (VTAA…ARQA). Residues 695–708 (VSEKNGPQTQNQQK) show a composition bias toward polar residues. 4 stretches are compositionally biased toward low complexity: residues 709-749 (SSPP…SSSP), 757-789 (QTQAAVHLAAAALQHHQQQQQQQQQNPFQQQTQ), 803-859 (EAPQ…AASL), and 885-926 (VTAA…SPAS). The span at 929 to 939 (QDANSTEGTSS) shows a compositional bias: polar residues. The span at 940 to 951 (EADKTTAKKGLV) shows a compositional bias: basic and acidic residues. A compositionally biased stretch (acidic residues) spans 953–968 (YESDSGEDDYEEDEYS).

It belongs to the SMEK family. In terms of assembly, serine/threonine-protein phosphatase 4 (PP4) occurs in different assemblies of the catalytic and one or more regulatory subunits. Probably part of a PP4 PPP4C-PPP4R2-PPP4R3 complex containing Pp4-19C, PPP4R2r and flfl. Interacts with mira. Expressed in neuroblasts.

It localises to the nucleus. It is found in the membrane. Its subcellular location is the cytoplasm. In terms of biological role, regulatory subunit of serine/threonine-protein phosphatase 4. The probable PP4 complex Pp4-19C-PPP4R2r-flfl (PPP4C-PPP4R2-PPP4R3) is required to prevent caspase induced cell death (in vitro). May be involved in DNA damage repair. Key mediator specific for the localization of mira and associated cell fate determinants during both interphase and mitosis. Nuclear Flfl is required to exclude mira/pros from the nucleus when inefficiently bound to the cytoskeleton/cortex, whereas cytosolic or membrane-associated flfl is required for the cortical association and asymmetric localization of mira/pros/brat/stau at metaphase and anaphase. This chain is Serine/threonine-protein phosphatase 4 regulatory subunit 3 (flfl), found in Drosophila melanogaster (Fruit fly).